Reading from the N-terminus, the 161-residue chain is uncharacterized protein (161 aa).

This is an uncharacterized protein from Haemophilus influenzae (strain ATCC 51907 / DSM 11121 / KW20 / Rd).